The chain runs to 352 residues: Chorismate synthase (352 aa).

NADP(+) is bound at residue Arg48. Residues 125-127, 237-238, Gly278, 293-297, and Arg319 each bind FMN; these read RSS, NA, and KPTSS.

The protein belongs to the chorismate synthase family. Homotetramer. FMNH2 serves as cofactor.

The enzyme catalyses 5-O-(1-carboxyvinyl)-3-phosphoshikimate = chorismate + phosphate. The protein operates within metabolic intermediate biosynthesis; chorismate biosynthesis; chorismate from D-erythrose 4-phosphate and phosphoenolpyruvate: step 7/7. In terms of biological role, catalyzes the anti-1,4-elimination of the C-3 phosphate and the C-6 proR hydrogen from 5-enolpyruvylshikimate-3-phosphate (EPSP) to yield chorismate, which is the branch point compound that serves as the starting substrate for the three terminal pathways of aromatic amino acid biosynthesis. This reaction introduces a second double bond into the aromatic ring system. The chain is Chorismate synthase from Francisella tularensis subsp. holarctica (strain FTNF002-00 / FTA).